Here is a 332-residue protein sequence, read N- to C-terminus: Glycerol-3-phosphate dehydrogenase [NAD(P)+] (332 aa).

NADPH-binding residues include tryptophan 13, lysine 34, and lysine 108. 3 residues coordinate sn-glycerol 3-phosphate: lysine 108, glycine 136, and serine 138. Alanine 140 is an NADPH binding site. Sn-glycerol 3-phosphate is bound by residues lysine 191, aspartate 244, serine 254, arginine 255, and asparagine 256. Lysine 191 (proton acceptor) is an active-site residue. Arginine 255 contributes to the NADPH binding site. NADPH-binding residues include valine 279 and glutamate 281.

Belongs to the NAD-dependent glycerol-3-phosphate dehydrogenase family.

The protein localises to the cytoplasm. The catalysed reaction is sn-glycerol 3-phosphate + NAD(+) = dihydroxyacetone phosphate + NADH + H(+). It catalyses the reaction sn-glycerol 3-phosphate + NADP(+) = dihydroxyacetone phosphate + NADPH + H(+). Its pathway is membrane lipid metabolism; glycerophospholipid metabolism. In terms of biological role, catalyzes the reduction of the glycolytic intermediate dihydroxyacetone phosphate (DHAP) to sn-glycerol 3-phosphate (G3P), the key precursor for phospholipid synthesis. The chain is Glycerol-3-phosphate dehydrogenase [NAD(P)+] from Francisella tularensis subsp. mediasiatica (strain FSC147).